Consider the following 190-residue polypeptide: UPF0340 protein BT9727_4999 (190 aa).

The protein belongs to the UPF0340 family.

The protein is UPF0340 protein BT9727_4999 of Bacillus thuringiensis subsp. konkukian (strain 97-27).